A 184-amino-acid chain; its full sequence is Ribosome-recycling factor (184 aa).

The protein belongs to the RRF family.

It localises to the cytoplasm. Functionally, responsible for the release of ribosomes from messenger RNA at the termination of protein biosynthesis. May increase the efficiency of translation by recycling ribosomes from one round of translation to another. This chain is Ribosome-recycling factor, found in Fervidobacterium nodosum (strain ATCC 35602 / DSM 5306 / Rt17-B1).